The following is a 343-amino-acid chain: tRNA N6-adenosine threonylcarbamoyltransferase (343 aa).

Fe cation contacts are provided by His-115 and His-119. Substrate-binding positions include 137–141 (LVSGG), Asp-170, Gly-183, Asp-187, and Asn-276. Fe cation is bound at residue Asp-306.

The protein belongs to the KAE1 / TsaD family. Fe(2+) is required as a cofactor.

The protein localises to the cytoplasm. The catalysed reaction is L-threonylcarbamoyladenylate + adenosine(37) in tRNA = N(6)-L-threonylcarbamoyladenosine(37) in tRNA + AMP + H(+). In terms of biological role, required for the formation of a threonylcarbamoyl group on adenosine at position 37 (t(6)A37) in tRNAs that read codons beginning with adenine. Is involved in the transfer of the threonylcarbamoyl moiety of threonylcarbamoyl-AMP (TC-AMP) to the N6 group of A37, together with TsaE and TsaB. TsaD likely plays a direct catalytic role in this reaction. The polypeptide is tRNA N6-adenosine threonylcarbamoyltransferase (Limosilactobacillus reuteri (strain DSM 20016) (Lactobacillus reuteri)).